The chain runs to 68 residues: Negative regulator of P-body association (68 aa).

The tract at residues Met-1–Lys-68 is disordered.

In terms of assembly, interacts with mRNA decapping proteins DCP1A, DCP2 and EDC4.

It localises to the cytoplasm. It is found in the P-body. Promotes dispersal of P-body components and is likely to play a role in the mRNA decapping process. In Homo sapiens (Human), this protein is Negative regulator of P-body association.